The primary structure comprises 121 residues: Non-specific lipid-transfer protein 3 (121 aa).

The N-terminal stretch at 1-28 (MAGARRTMALVALVAVVAAAVVAERASA) is a signal peptide. Intrachain disulfides connect Cys32/Cys80, Cys42/Cys57, Cys58/Cys103, and Cys78/Cys117.

The protein belongs to the plant LTP family.

In terms of biological role, plant non-specific lipid-transfer proteins transfer phospholipids as well as galactolipids across membranes. May play a role in wax or cutin deposition in the cell walls of expanding epidermal cells and certain secretory tissues. May possess an antifungal activity and protect the plant against pathogens. The chain is Non-specific lipid-transfer protein 3 (LTP110-A) from Oryza sativa subsp. indica (Rice).